The following is a 405-amino-acid chain: 1-deoxy-D-xylulose 5-phosphate reductoisomerase (405 aa).

Residues threonine 16, glycine 17, serine 18, isoleucine 19, glycine 42, arginine 43, asparagine 44, and asparagine 130 each contribute to the NADPH site. Residue lysine 131 participates in 1-deoxy-D-xylulose 5-phosphate binding. An NADPH-binding site is contributed by glutamate 132. Aspartate 156 contacts Mn(2+). Residues serine 157, glutamate 158, serine 192, and histidine 215 each coordinate 1-deoxy-D-xylulose 5-phosphate. Glutamate 158 contributes to the Mn(2+) binding site. Glycine 221 provides a ligand contact to NADPH. 4 residues coordinate 1-deoxy-D-xylulose 5-phosphate: serine 228, asparagine 233, lysine 234, and glutamate 237. Glutamate 237 is a Mn(2+) binding site.

The protein belongs to the DXR family. It depends on Mg(2+) as a cofactor. Mn(2+) serves as cofactor.

The enzyme catalyses 2-C-methyl-D-erythritol 4-phosphate + NADP(+) = 1-deoxy-D-xylulose 5-phosphate + NADPH + H(+). Its pathway is isoprenoid biosynthesis; isopentenyl diphosphate biosynthesis via DXP pathway; isopentenyl diphosphate from 1-deoxy-D-xylulose 5-phosphate: step 1/6. Its function is as follows. Catalyzes the NADPH-dependent rearrangement and reduction of 1-deoxy-D-xylulose-5-phosphate (DXP) to 2-C-methyl-D-erythritol 4-phosphate (MEP). This chain is 1-deoxy-D-xylulose 5-phosphate reductoisomerase, found in Pasteurella multocida (strain Pm70).